The following is a 337-amino-acid chain: tRNA N6-adenosine threonylcarbamoyltransferase (337 aa).

The Fe cation site is built by His-110 and His-114. Residues 133–137 (LVSGK), Asp-166, Gly-179, and Asn-271 each bind substrate. Residue Asp-300 participates in Fe cation binding.

It belongs to the KAE1 / TsaD family. The cofactor is Fe(2+).

The protein resides in the cytoplasm. The enzyme catalyses L-threonylcarbamoyladenylate + adenosine(37) in tRNA = N(6)-L-threonylcarbamoyladenosine(37) in tRNA + AMP + H(+). Functionally, required for the formation of a threonylcarbamoyl group on adenosine at position 37 (t(6)A37) in tRNAs that read codons beginning with adenine. Is involved in the transfer of the threonylcarbamoyl moiety of threonylcarbamoyl-AMP (TC-AMP) to the N6 group of A37, together with TsaE and TsaB. TsaD likely plays a direct catalytic role in this reaction. In Buchnera aphidicola subsp. Schizaphis graminum (strain Sg), this protein is tRNA N6-adenosine threonylcarbamoyltransferase.